We begin with the raw amino-acid sequence, 139 residues long: MAMTVHCDIVSAEGEIFSGLVEMVVAHGNLGDLGIAPGHAPLITNLKPGPITLTKQGGAQEVYYISGGFLEVQPNMVKVLADTVQRATDLDEAQAQEALKAAENALSLKGADFDYGAAAARLAEAAAQLRTVQQMRKGK.

This sequence belongs to the ATPase epsilon chain family. In terms of assembly, F-type ATPases have 2 components, CF(1) - the catalytic core - and CF(0) - the membrane proton channel. CF(1) has five subunits: alpha(3), beta(3), gamma(1), delta(1), epsilon(1). CF(0) has three main subunits: a, b and c.

The protein localises to the cell inner membrane. In terms of biological role, produces ATP from ADP in the presence of a proton gradient across the membrane. In Pseudomonas putida (strain W619), this protein is ATP synthase epsilon chain.